The following is a 152-amino-acid chain: Ninjurin-1 (152 aa).

Met1 is modified (N-acetylmethionine). Positions 1-10 (MDPGTEEYEL) are enriched in acidic residues. A disordered region spans residues 1–30 (MDPGTEEYELNGDLRPGSPGSPDASPPRWG). The Extracellular portion of the chain corresponds to 1–78 (MDPGTEEYEL…EQGNEFAFFV (78 aa)). Residues 16–27 (PGSPGSPDASPP) are compositionally biased toward low complexity. A phosphoserine mark is found at Ser18, Ser21, and Ser25. Positions 26-37 (PPRWGLRNRPIN) are N-terminal adhesion motif. The required to induce plasma membrane rupture stretch occupies residues 40-69 (HYANKKSAAESMLDIALLMANASQLKAVVE). The interval 44–55 (KKSAAESMLDIA) is helix alpha1. The interval 58 to 74 (MANASQLKAVVEQGNEF) is helix alpha2. Asn60 is a glycosylation site (N-linked (GlcNAc...) asparagine). The chain crosses the membrane as a helical span at residues 79–103 (PLVVLISISLVLQIGVGVLLIFLVK). Over 104 to 113 (YDLNNPAKHA) the chain is Cytoplasmic. A helical transmembrane segment spans residues 114 to 138 (KLDFLNNLATGLVFIIVVVNIFITA). At 139–152 (FGVQKPVMDVAPRQ) the chain is on the extracellular side.

This sequence belongs to the ninjurin family. In terms of assembly, homodimer; in absence of death stimuli, forms an inactive homodimer. Homooligomer; in response to death stimuli, homooligomerizes into long, highly branched filaments and large, ring-shaped structures in the membrane. The topology shown in the entry corresponds to the activated form. Cleaved by MMP9 protease to generate the Secreted ninjurin-1 form. Post-translationally, N-linked glycosylation is required for homooligomerization.

The protein resides in the cell membrane. The protein localises to the synaptic cell membrane. Its subcellular location is the secreted. Its activity is regulated as follows. In response to death stimuli, homooligomerizes and disrupts membrane integrity by introducing the hydrophilic faces of alpha1 and alpha2 helices into the hydrophobic membrane. Homooligomerization and ability to mediate plasma membrane rupture is inhibited by glycine; it is unclear whether glycine directly or indirectly inhibits homooligomerization. In normal conditions, NINJ1 is autoinhibited via formation of a homodimer: in the inactive homodimer, the alpha1 and alpha2 helices (residues 44-74) form a single transmembrane region without a kink, in which hydrophilic faces of alpha1 and alpha2 helices are sequestered. Its function is as follows. Effector of various programmed cell death, such as pyroptosis and necroptosis, which mediates plasma membrane rupture (cytolysis). Oligomerizes in response to death stimuli and forms ring-like structures on the plasma membrane: acts by cutting and shedding membrane disks, like a cookie cutter, leading to membrane damage and loss that cannot be repaired by the cell. Plasma membrane rupture leads to release intracellular molecules named damage-associated molecular patterns (DAMPs) that propagate the inflammatory response. Mechanistically, mediates plasma membrane rupture by introducing hydrophilic faces of 2 alpha helices into the hydrophobic membrane. Induces plasma membrane rupture downstream of Gasdermin (GSDMA, GSDMB, GSDMC, GSDMD, or GSDME) or MLKL during pyroptosis or necroptosis, respectively. Acts as an effector of PANoptosis downstream of CASP1, CASP4, CASP8 and RIPK3. Also induces plasma membrane rupture in response to cell swelling caused by osmotic stress and ferroptosis downstream of lipid peroxidation. Acts as a regulator of Toll-like receptor 4 (TLR4) signaling triggered by lipopolysaccharide (LPS) during systemic inflammation; directly binds LPS. Involved in leukocyte migration during inflammation by promoting transendothelial migration of macrophages via homotypic binding. Promotes the migration of monocytes across the brain endothelium to central nervous system inflammatory lesions. Also acts as a homophilic transmembrane adhesion molecule involved in various processes such as axonal growth, cell chemotaxis and angiogenesis. Promotes cell adhesion by mediating homophilic interactions via its extracellular N-terminal adhesion motif (N-NAM). Involved in the progression of the inflammatory stress by promoting cell-to-cell interactions between immune cells and endothelial cells. Plays a role in nerve regeneration by promoting maturation of Schwann cells. Acts as a regulator of angiogenesis. Promotes the formation of new vessels by mediating the interaction between capillary pericyte cells and endothelial cells. Promotes osteoclasts development by enhancing the survival of prefusion osteoclasts. Also involved in striated muscle growth and differentiation. Secreted form generated by cleavage, which has chemotactic activity. Acts as an anti-inflammatory mediator by promoting monocyte recruitment, thereby ameliorating atherosclerosis. In Rattus norvegicus (Rat), this protein is Ninjurin-1.